The sequence spans 203 residues: MPIGVPKVPFRSPGEEDAVWVDVNRLHRERLLFLGQEVDNEVSNQLVGLMVYLSIEDATKDLYLFINSPGGWVIPGMAIYDTMQFVSPDVHTICMGLAASMGSLILVGGEITKRLAFPHARVMIHQPASSFYEAQAGEFILEAEELLKLRETLTKVYVQRTGNPLWAVSEDMERDAFMSATEAQAHGIVDLVAVENENTNDFV.

The active-site Nucleophile is serine 100. Histidine 125 is an active-site residue.

It belongs to the peptidase S14 family. Component of the chloroplastic Clp protease core complex.

It is found in the plastid. The protein localises to the chloroplast stroma. It carries out the reaction Hydrolysis of proteins to small peptides in the presence of ATP and magnesium. alpha-casein is the usual test substrate. In the absence of ATP, only oligopeptides shorter than five residues are hydrolyzed (such as succinyl-Leu-Tyr-|-NHMec, and Leu-Tyr-Leu-|-Tyr-Trp, in which cleavage of the -Tyr-|-Leu- and -Tyr-|-Trp bonds also occurs).. In terms of biological role, cleaves peptides in various proteins in a process that requires ATP hydrolysis. Has a chymotrypsin-like activity. Plays a major role in the degradation of misfolded proteins. The polypeptide is ATP-dependent Clp protease proteolytic subunit (Dioscorea elephantipes (Elephant's foot yam)).